A 129-amino-acid polypeptide reads, in one-letter code: Histone H2A-III (129 aa).

It belongs to the histone H2A family. The nucleosome is a histone octamer containing two molecules each of H2A, H2B, H3 and H4 assembled in one H3-H4 heterotetramer and two H2A-H2B heterodimers. The octamer wraps approximately 147 bp of DNA.

It is found in the nucleus. The protein localises to the chromosome. In terms of biological role, core component of nucleosome. Nucleosomes wrap and compact DNA into chromatin, limiting DNA accessibility to the cellular machineries which require DNA as a template. Histones thereby play a central role in transcription regulation, DNA repair, DNA replication and chromosomal stability. DNA accessibility is regulated via a complex set of post-translational modifications of histones, also called histone code, and nucleosome remodeling. The polypeptide is Histone H2A-III (Volvox carteri (Green alga)).